We begin with the raw amino-acid sequence, 88 residues long: LYR motif-containing protein 2 (88 aa).

The transit peptide at 1–19 (MAVSRLPPAALSLKQFLQR) directs the protein to the mitochondrion.

The protein belongs to the complex I LYR family.

Its subcellular location is the mitochondrion. In terms of biological role, involved in efficient integration of the N-module into mitochondrial respiratory chain complex I. The protein is LYR motif-containing protein 2 (lyrm2) of Danio rerio (Zebrafish).